We begin with the raw amino-acid sequence, 168 residues long: MAKLKIKKYGDPALRKRAEAVSEINEIIKELASDMLETMYSASGVGLAAPQVGILLRFCVIDVDPNKKSPIVMINPEIISGENKITAEEGCLSFPGFYGNVNRFENIIAGYTDLNGNRQEIKAQNFLAKALQHEIDHLDAKLFIDYLPDWKRESIEKKIKRKKKAGDW.

The Fe cation site is built by Cys91 and His133. Residue Glu134 is part of the active site. His137 lines the Fe cation pocket.

Belongs to the polypeptide deformylase family. Requires Fe(2+) as cofactor.

The catalysed reaction is N-terminal N-formyl-L-methionyl-[peptide] + H2O = N-terminal L-methionyl-[peptide] + formate. Its function is as follows. Removes the formyl group from the N-terminal Met of newly synthesized proteins. Requires at least a dipeptide for an efficient rate of reaction. N-terminal L-methionine is a prerequisite for activity but the enzyme has broad specificity at other positions. This Endomicrobium trichonymphae protein is Peptide deformylase.